Reading from the N-terminus, the 502-residue chain is Tubulin gamma chain (502 aa).

Polar residues predominate over residues 51–68 (ELNNSGSSPQSYPQQTKP). The segment at 51 to 73 (ELNNSGSSPQSYPQQTKPNGKYR) is disordered. GTP is bound at residue 169–175 (AGGTGSG). Acidic residues predominate over residues 473–482 (DDEDDLEDGD). The interval 473–502 (DDEDDLEDGDGGGGGNGNGYNNIDDADMGI) is disordered.

Belongs to the tubulin family.

Its subcellular location is the cytoplasm. It is found in the cytoskeleton. The protein localises to the microtubule organizing center. It localises to the spindle pole body. In terms of biological role, tubulin is the major constituent of microtubules. The gamma chain is found at microtubule organizing centers (MTOC) such as the spindle poles or the centrosome, suggesting that it is involved in the minus-end nucleation of microtubule assembly. The chain is Tubulin gamma chain (TUB4) from Candida albicans (Yeast).